The chain runs to 141 residues: Galactose-6-phosphate isomerase subunit LacA (141 aa).

Belongs to the LacAB/RpiB family. As to quaternary structure, heteromultimeric protein consisting of LacA and LacB.

It carries out the reaction aldehydo-D-galactose 6-phosphate = keto-D-tagatose 6-phosphate. It functions in the pathway carbohydrate metabolism; D-galactose 6-phosphate degradation; D-tagatose 6-phosphate from D-galactose 6-phosphate: step 1/1. This is Galactose-6-phosphate isomerase subunit LacA from Streptococcus agalactiae serotype Ia (strain ATCC 27591 / A909 / CDC SS700).